A 393-amino-acid polypeptide reads, in one-letter code: Phosphoglycerate kinase (393 aa).

Substrate is bound by residues 22–24 (DFN), Arg37, 60–63 (HLGR), Arg119, and Arg152. ATP contacts are provided by residues Lys202, Gly293, Glu324, and 350–353 (GGDS).

Belongs to the phosphoglycerate kinase family. In terms of assembly, monomer.

The protein resides in the cytoplasm. It carries out the reaction (2R)-3-phosphoglycerate + ATP = (2R)-3-phospho-glyceroyl phosphate + ADP. It participates in carbohydrate degradation; glycolysis; pyruvate from D-glyceraldehyde 3-phosphate: step 2/5. In Borreliella afzelii (strain PKo) (Borrelia afzelii), this protein is Phosphoglycerate kinase.